We begin with the raw amino-acid sequence, 98 residues long: Defensin-like protein 68 (98 aa).

Residues 1-19 (MGSSKLLVALTLVVMITIS) form the signal peptide. Disulfide bonds link Cys-38-Cys-88, Cys-42-Cys-65, Cys-51-Cys-86, and Cys-55-Cys-87.

Belongs to the DEFL family.

Its subcellular location is the secreted. The chain is Defensin-like protein 68 from Arabidopsis thaliana (Mouse-ear cress).